We begin with the raw amino-acid sequence, 191 residues long: NAD(P)H-quinone oxidoreductase subunit L, chloroplastic (191 aa).

The N-terminal 46 residues, 1–46, are a transit peptide targeting the chloroplast; it reads MSRCGSLGLYAPNALPSLSLKPRSVKSPFCITSHTKPNDTLLHNVN. The next 3 helical transmembrane spans lie at 61–81, 93–113, and 129–149; these read TILA…ALAI, VVLD…PIIM, and YLQF…APFL.

Belongs to the NDH complex subunit L family. As to quaternary structure, part of the chloroplast NDH complex, composed of a mixture of chloroplast and nucleus encoded subunits. Component of the NDH subcomplex A, at least composed of ndhH, ndhI, ndhJ, ndhK, ndhL, ndhM, ndhN and ndhO.

The protein resides in the plastid. It is found in the chloroplast thylakoid membrane. The catalysed reaction is a plastoquinone + NADH + (n+1) H(+)(in) = a plastoquinol + NAD(+) + n H(+)(out). The enzyme catalyses a plastoquinone + NADPH + (n+1) H(+)(in) = a plastoquinol + NADP(+) + n H(+)(out). In terms of biological role, NDH shuttles electrons from NAD(P)H:plastoquinone, via FMN and iron-sulfur (Fe-S) centers, to quinones in the photosynthetic chain and possibly in a chloroplast respiratory chain. The immediate electron acceptor for the enzyme in this species is believed to be plastoquinone. Couples the redox reaction to proton translocation, and thus conserves the redox energy in a proton gradient. This Arabidopsis thaliana (Mouse-ear cress) protein is NAD(P)H-quinone oxidoreductase subunit L, chloroplastic.